We begin with the raw amino-acid sequence, 202 residues long: dITP/XTP pyrophosphatase (202 aa).

7-12 serves as a coordination point for substrate; the sequence is SNNPGK. The Mg(2+) site is built by E39 and D68. The Proton acceptor role is filled by D68. Substrate contacts are provided by residues A69, 157-160, K180, and 185-186; these read FGFD and HR.

This sequence belongs to the HAM1 NTPase family. As to quaternary structure, homodimer. Mg(2+) serves as cofactor.

It catalyses the reaction XTP + H2O = XMP + diphosphate + H(+). It carries out the reaction dITP + H2O = dIMP + diphosphate + H(+). The enzyme catalyses ITP + H2O = IMP + diphosphate + H(+). In terms of biological role, pyrophosphatase that catalyzes the hydrolysis of nucleoside triphosphates to their monophosphate derivatives, with a high preference for the non-canonical purine nucleotides XTP (xanthosine triphosphate), dITP (deoxyinosine triphosphate) and ITP. Seems to function as a house-cleaning enzyme that removes non-canonical purine nucleotides from the nucleotide pool, thus preventing their incorporation into DNA/RNA and avoiding chromosomal lesions. This Polaromonas naphthalenivorans (strain CJ2) protein is dITP/XTP pyrophosphatase.